The primary structure comprises 577 residues: Outer spore wall assembly protein SHE10 (577 aa).

The N-terminal stretch at 1–23 (MGKLIKLITTLTVLVSLLQYCCE) is a signal peptide. Coiled coils occupy residues 379–416 (NETRSTLDELTNAMEKDLSEITDEIEKKVNAIREENVE) and 513–561 (ILRS…EEDV). Basic and acidic residues predominate over residues 525–545 (RERKERERKEREKAAAEEFQR). A disordered region spans residues 525 to 577 (RERKERERKEREKAAAEEFQRQQELLRQQEEEDEEDVSYTSTSTITTTTTMTL). The span at 562–577 (SYTSTSTITTTTTMTL) shows a compositional bias: low complexity.

This sequence belongs to the SHE10 family. Component of the mitochondria-localized RNase mitochondrial RNA-processing (RNase MRP) composed of one single RNA encoded by the NME1 gene and at least 31 proteins. Absent in the nucleus-localized RNase MRP (NuMRP).

It is found in the mitochondrion. In terms of biological role, involved in spore wall assembly. May be a component of the mitochondrial RNase MRP (MtMRP), a ribonucleoprotein endoribonuclease involved in the cleaving RNA transcripts to generate primers for DNA replication in mitochondria. The protein is Outer spore wall assembly protein SHE10 of Saccharomyces cerevisiae (strain Lalvin EC1118 / Prise de mousse) (Baker's yeast).